Reading from the N-terminus, the 460-residue chain is Cysteine--tRNA ligase (460 aa).

Cysteine 28 lines the Zn(2+) pocket. Positions 30-40 (MTVYDYCHLGH) match the 'HIGH' region motif. Cysteine 209, histidine 234, and glutamate 238 together coordinate Zn(2+). Positions 266–270 (KMSKS) match the 'KMSKS' region motif. Residue lysine 269 participates in ATP binding.

This sequence belongs to the class-I aminoacyl-tRNA synthetase family. Monomer. The cofactor is Zn(2+).

It localises to the cytoplasm. It catalyses the reaction tRNA(Cys) + L-cysteine + ATP = L-cysteinyl-tRNA(Cys) + AMP + diphosphate. This Pseudomonas paraeruginosa (strain DSM 24068 / PA7) (Pseudomonas aeruginosa (strain PA7)) protein is Cysteine--tRNA ligase.